Reading from the N-terminus, the 164-residue chain is Crossover junction endodeoxyribonuclease RuvC (164 aa).

Active-site residues include aspartate 7, glutamate 67, and aspartate 139. Aspartate 7, glutamate 67, and aspartate 139 together coordinate Mg(2+).

Belongs to the RuvC family. In terms of assembly, homodimer which binds Holliday junction (HJ) DNA. The HJ becomes 2-fold symmetrical on binding to RuvC with unstacked arms; it has a different conformation from HJ DNA in complex with RuvA. In the full resolvosome a probable DNA-RuvA(4)-RuvB(12)-RuvC(2) complex forms which resolves the HJ. The cofactor is Mg(2+).

Its subcellular location is the cytoplasm. The enzyme catalyses Endonucleolytic cleavage at a junction such as a reciprocal single-stranded crossover between two homologous DNA duplexes (Holliday junction).. Functionally, the RuvA-RuvB-RuvC complex processes Holliday junction (HJ) DNA during genetic recombination and DNA repair. Endonuclease that resolves HJ intermediates. Cleaves cruciform DNA by making single-stranded nicks across the HJ at symmetrical positions within the homologous arms, yielding a 5'-phosphate and a 3'-hydroxyl group; requires a central core of homology in the junction. The consensus cleavage sequence is 5'-(A/T)TT(C/G)-3'. Cleavage occurs on the 3'-side of the TT dinucleotide at the point of strand exchange. HJ branch migration catalyzed by RuvA-RuvB allows RuvC to scan DNA until it finds its consensus sequence, where it cleaves and resolves the cruciform DNA. This is Crossover junction endodeoxyribonuclease RuvC from Citrifermentans bemidjiense (strain ATCC BAA-1014 / DSM 16622 / JCM 12645 / Bem) (Geobacter bemidjiensis).